Consider the following 103-residue polypeptide: Large ribosomal subunit protein bL21 (103 aa).

The protein belongs to the bacterial ribosomal protein bL21 family. As to quaternary structure, part of the 50S ribosomal subunit. Contacts protein L20.

In terms of biological role, this protein binds to 23S rRNA in the presence of protein L20. This Variovorax paradoxus (strain S110) protein is Large ribosomal subunit protein bL21.